The chain runs to 485 residues: Homeobox protein unplugged (485 aa).

Disordered regions lie at residues Met1 to Glu65, Pro114 to Phe157, and Gly212 to Ala325. A compositionally biased stretch (acidic residues) spans Arg54–Gln64. Residues Pro114–Gln128 show a composition bias toward low complexity. Polar residues-rich tracts occupy residues Gln223–His234 and Asp254–Asn267. Residues Asp284–Gly293 are compositionally biased toward acidic residues. Residues Ser308–Ser317 show a composition bias toward low complexity. A DNA-binding region (homeobox) is located at residues Ser319–Lys378.

As to expression, expressed in the neuroectodermal and mesectodermal cells at the ventral midline of stage 8 embryos, Subsequently, expression domains in the CNS widen and have their most anterior border in the posterior deutocerebrum. Oc/otd and unpg are mutual repressors at the interface of their brain-specific expression domains. Expression fades during germ band retraction and is then restricted to subset of cells by stage 14. Expressed in the founder cells of the cerebral branch within the first tracheal metamere. Outside the CNS, expression is seen in two clusters of ectodermal cells located laterally within the labial and first thoracic segments of stage 9 embryos. By stage 13, the expression is detected in a few cells close to the dorsal midline of the embryos.

The protein localises to the nucleus. Its function is as follows. Plays a regulatory role in neural branching of the tracheae: segment-specific aspects of these neural branching patterns appear to be generated by homeotic regulation of expression. May have a role with oc/otd in the postembryonic development of the brain. The polypeptide is Homeobox protein unplugged (Drosophila melanogaster (Fruit fly)).